The following is a 313-amino-acid chain: uncharacterized protein (313 aa).

The signal sequence occupies residues 1-24 (MKRRRRWRGWLLFLALCFCLLCEA). Residues Asn28, Asn43, Asn57, Asn77, Asn101, Asn102, Asn109, Asn149, Asn168, Asn215, Asn222, Asn251, Asn254, and Asn267 are each glycosylated (N-linked (GlcNAc...) asparagine; by host). The disordered stretch occupies residues 47 to 73 (ATTGTTTTSPNVTSTTSNTVTTPTTVS). A compositionally biased stretch (low complexity) spans 90–114 (STVSGTRNTRNNNTTTIGTNATSPS). The disordered stretch occupies residues 90–117 (STVSGTRNTRNNNTTTIGTNATSPSSSV).

The protein belongs to the HHV-5 US34A protein family.

This is an uncharacterized protein from Homo sapiens (Human).